A 481-amino-acid polypeptide reads, in one-letter code: Sulfate adenylyltransferase subunit 1 (481 aa).

Residues 22-236 (KDLLRFITCG…LLDSIRLDAD (215 aa)) enclose the tr-type G domain. The tract at residues 31 to 38 (GSVDDGKS) is G1. 31-38 (GSVDDGKS) lines the GTP pocket. The segment at 89 to 93 (GITID) is G2. Positions 110 to 113 (DCPG) are G3. GTP contacts are provided by residues 110 to 114 (DCPGH) and 165 to 168 (NKMD). Positions 165-168 (NKMD) are G4. A G5 region spans residues 202-204 (SAL).

This sequence belongs to the TRAFAC class translation factor GTPase superfamily. Classic translation factor GTPase family. CysN/NodQ subfamily. Heterodimer composed of CysD, the smaller subunit, and CysN.

It catalyses the reaction sulfate + ATP + H(+) = adenosine 5'-phosphosulfate + diphosphate. It participates in sulfur metabolism; hydrogen sulfide biosynthesis; sulfite from sulfate: step 1/3. In terms of biological role, with CysD forms the ATP sulfurylase (ATPS) that catalyzes the adenylation of sulfate producing adenosine 5'-phosphosulfate (APS) and diphosphate, the first enzymatic step in sulfur assimilation pathway. APS synthesis involves the formation of a high-energy phosphoric-sulfuric acid anhydride bond driven by GTP hydrolysis by CysN coupled to ATP hydrolysis by CysD. This chain is Sulfate adenylyltransferase subunit 1, found in Laribacter hongkongensis (strain HLHK9).